Reading from the N-terminus, the 206-residue chain is Small ribosomal subunit protein uS4 (206 aa).

The tract at residues 29–52 (LDKRPYAPGQHGQRRGRGRPSDYS) is disordered. The S4 RNA-binding domain maps to 96–171 (RRLDNVVFRM…QKRRRVSPWV (76 aa)).

This sequence belongs to the universal ribosomal protein uS4 family. In terms of assembly, part of the 30S ribosomal subunit. Contacts protein S5. The interaction surface between S4 and S5 is involved in control of translational fidelity.

Functionally, one of the primary rRNA binding proteins, it binds directly to 16S rRNA where it nucleates assembly of the body of the 30S subunit. With S5 and S12 plays an important role in translational accuracy. This Deinococcus deserti (strain DSM 17065 / CIP 109153 / LMG 22923 / VCD115) protein is Small ribosomal subunit protein uS4.